We begin with the raw amino-acid sequence, 764 residues long: Ribosomal protein S6 kinase alpha-6 (764 aa).

Residues 1–24 are disordered; that stretch reads MLPFAPVEDPWDQEDMEVFGSTSS. A Protein kinase 1 domain is found at 93–350; the sequence is FDLLKVLGQG…VEEVKRHAFF (258 aa). ATP-binding positions include 99–107 and Lys125; that span reads LGQGSFGKV. Residue Asp218 is the Proton acceptor of the active site. Ser252, Ser392, and Ser409 each carry phosphoserine. An AGC-kinase C-terminal domain is found at 351 to 420; that stretch reads ASIDWNKLYK…VATSIAEEYK (70 aa). In terms of domain architecture, Protein kinase 2 spans 446 to 706; that stretch reads YELKEDIGIG…VLKHPWITQR (261 aa). Residues 452-460 and Lys475 contribute to the ATP site; that span reads IGIGSYSVC. Asp563 acts as the Proton acceptor in catalysis. Residue Thr601 is modified to Phosphothreonine.

Belongs to the protein kinase superfamily. AGC Ser/Thr protein kinase family. S6 kinase subfamily. As to quaternary structure, forms a complex with MAPK3/ERK1 but not with MAPK9 or MAPK14 in serum-starved cells. The cofactor is Mg(2+). In terms of processing, phosphorylated at Ser-252, Ser-392, and Ser-409 in serum-starved cells.

It localises to the cytoplasm. The protein localises to the cytosol. Its subcellular location is the nucleus. The catalysed reaction is L-seryl-[protein] + ATP = O-phospho-L-seryl-[protein] + ADP + H(+). It catalyses the reaction L-threonyl-[protein] + ATP = O-phospho-L-threonyl-[protein] + ADP + H(+). Constitutively activated by phosphorylation at Ser-252, Ser-392, and Ser-409 in serum-starved cells. Does not require growth factor stimulation for significant kinase activity. Its function is as follows. Constitutively active serine/threonine-protein kinase that exhibits growth-factor-independent kinase activity and that may participate in p53/TP53-dependent cell growth arrest signaling and play an inhibitory role during embryogenesis. In Mus musculus (Mouse), this protein is Ribosomal protein S6 kinase alpha-6 (Rps6ka6).